Reading from the N-terminus, the 240-residue chain is Demethylmenaquinone methyltransferase (240 aa).

S-adenosyl-L-methionine contacts are provided by residues Thr-62, Asp-80, Asp-102–Ala-103, and Ser-119.

Belongs to the class I-like SAM-binding methyltransferase superfamily. MenG/UbiE family.

It carries out the reaction a 2-demethylmenaquinol + S-adenosyl-L-methionine = a menaquinol + S-adenosyl-L-homocysteine + H(+). It participates in quinol/quinone metabolism; menaquinone biosynthesis; menaquinol from 1,4-dihydroxy-2-naphthoate: step 2/2. Its function is as follows. Methyltransferase required for the conversion of demethylmenaquinol (DMKH2) to menaquinol (MKH2). The sequence is that of Demethylmenaquinone methyltransferase from Beutenbergia cavernae (strain ATCC BAA-8 / DSM 12333 / CCUG 43141 / JCM 11478 / NBRC 16432 / NCIMB 13614 / HKI 0122).